A 505-amino-acid chain; its full sequence is AMP phosphorylase (505 aa).

AMP-binding positions include glycine 170, 196–201 (SRAITS), and threonine 205. Aspartate 258 serves as the catalytic Proton donor. AMP is bound by residues serine 266 and lysine 290.

Belongs to the thymidine/pyrimidine-nucleoside phosphorylase family. Type 2 subfamily.

The enzyme catalyses AMP + phosphate = alpha-D-ribose 1,5-bisphosphate + adenine. It carries out the reaction CMP + phosphate = cytosine + alpha-D-ribose 1,5-bisphosphate. The catalysed reaction is UMP + phosphate = alpha-D-ribose 1,5-bisphosphate + uracil. Catalyzes the conversion of AMP and phosphate to adenine and ribose 1,5-bisphosphate (R15P). Exhibits phosphorylase activity toward CMP and UMP in addition to AMP. Functions in an archaeal AMP degradation pathway, together with R15P isomerase and RubisCO. The chain is AMP phosphorylase from Methanococcus maripaludis (strain C7 / ATCC BAA-1331).